The primary structure comprises 355 residues: Probable GTP 3',8-cyclase (355 aa).

A Radical SAM core domain is found at 5 to 233; the sequence is AYGRPLKDLR…GRLHNRRVYR (229 aa). Residue R14 coordinates GTP. Residues C21, C25, and C28 each coordinate [4Fe-4S] cluster. Residue K69 participates in GTP binding. G73 contributes to the S-adenosyl-L-methionine binding site. T97 contributes to the GTP binding site. S121 lines the S-adenosyl-L-methionine pocket. Position 157 (K157) interacts with GTP. Residues C252 and C255 each contribute to the [4Fe-4S] cluster site. 257–259 is a GTP binding site; sequence RVR. C269 contacts [4Fe-4S] cluster.

The protein belongs to the radical SAM superfamily. MoaA family. [4Fe-4S] cluster is required as a cofactor.

The enzyme catalyses GTP + AH2 + S-adenosyl-L-methionine = (8S)-3',8-cyclo-7,8-dihydroguanosine 5'-triphosphate + 5'-deoxyadenosine + L-methionine + A + H(+). Its pathway is cofactor biosynthesis; molybdopterin biosynthesis. In terms of biological role, catalyzes the cyclization of GTP to (8S)-3',8-cyclo-7,8-dihydroguanosine 5'-triphosphate. This is Probable GTP 3',8-cyclase from Aeropyrum pernix (strain ATCC 700893 / DSM 11879 / JCM 9820 / NBRC 100138 / K1).